A 477-amino-acid chain; its full sequence is Dihydrolipoyl dehydrogenase 3 (477 aa).

Residues 39–47 (EKGEYGGAC), lysine 56, and alanine 118 each bind FAD. A disulfide bridge connects residues cysteine 47 and cysteine 52. NAD(+) is bound by residues 186–190 (GAGYI), glutamate 209, and 279–282 (AVGR). The FAD site is built by aspartate 322 and alanine 330. The active-site Proton acceptor is the histidine 454.

It belongs to the class-I pyridine nucleotide-disulfide oxidoreductase family. Homodimer. Requires FAD as cofactor.

The protein localises to the cytoplasm. The enzyme catalyses N(6)-[(R)-dihydrolipoyl]-L-lysyl-[protein] + NAD(+) = N(6)-[(R)-lipoyl]-L-lysyl-[protein] + NADH + H(+). The chain is Dihydrolipoyl dehydrogenase 3 (lpdA3) from Haloarcula marismortui (strain ATCC 43049 / DSM 3752 / JCM 8966 / VKM B-1809) (Halobacterium marismortui).